The following is a 287-amino-acid chain: Protease HtpX (287 aa).

Transmembrane regions (helical) follow at residues 4-24 (IFLL…VMSI) and 33-53 (GGLL…SLAI). His139 contacts Zn(2+). Glu140 is an active-site residue. Residue His143 participates in Zn(2+) binding. 2 consecutive transmembrane segments (helical) span residues 154 to 174 (LIQG…AGII) and 195 to 215 (AVVF…VAYF). Glu220 lines the Zn(2+) pocket.

It belongs to the peptidase M48B family. Requires Zn(2+) as cofactor.

It is found in the cell inner membrane. The chain is Protease HtpX from Shewanella oneidensis (strain ATCC 700550 / JCM 31522 / CIP 106686 / LMG 19005 / NCIMB 14063 / MR-1).